The sequence spans 114 residues: Anti-adapter protein IraM (114 aa).

This sequence belongs to the IraM/RssC family.

It is found in the cytoplasm. Its function is as follows. Involved in the stabilization of the sigma stress factor RpoS. In Citrobacter koseri (strain ATCC BAA-895 / CDC 4225-83 / SGSC4696), this protein is Anti-adapter protein IraM.